The sequence spans 222 residues: Probable fructose-6-phosphate aldolase (222 aa).

K87 functions as the Schiff-base intermediate with substrate in the catalytic mechanism.

The protein belongs to the transaldolase family. Type 3A subfamily.

It localises to the cytoplasm. It catalyses the reaction beta-D-fructose 6-phosphate = dihydroxyacetone + D-glyceraldehyde 3-phosphate. Catalyzes the reversible formation of fructose 6-phosphate from dihydroxyacetone and D-glyceraldehyde 3-phosphate via an aldolization reaction. This Streptococcus pneumoniae (strain ATCC 700669 / Spain 23F-1) protein is Probable fructose-6-phosphate aldolase.